An 831-amino-acid polypeptide reads, in one-letter code: Periplasmic nitrate reductase (831 aa).

Positions 1–31 (MTISRRDLLKAQAAGIAAMAANIPLSSQAPA) form a signal peptide, tat-type signal. A 4Fe-4S Mo/W bis-MGD-type domain is found at 41-97 (ITWSKAPCRFCGTGCGVMVGVKEGRVVATHGDLLAEVNRGLNCVKGYFLSKIMYGAD). Residues Cys-48, Cys-51, Cys-55, and Cys-83 each coordinate [4Fe-4S] cluster. Mo-bis(molybdopterin guanine dinucleotide) is bound by residues Lys-85, Gln-152, Asn-177, Cys-181, 214–221 (WGSNMAEM), 245–249 (STFTH), 264–266 (GTD), Met-375, Gln-379, Asn-485, 511–512 (SD), Lys-534, Asp-561, and 721–730 (TGRVLEHWHS). Trp-797 provides a ligand contact to substrate. Asn-805 and Lys-822 together coordinate Mo-bis(molybdopterin guanine dinucleotide).

This sequence belongs to the prokaryotic molybdopterin-containing oxidoreductase family. NasA/NapA/NarB subfamily. In terms of assembly, component of the periplasmic nitrate reductase NapAB complex composed of NapA and NapB. [4Fe-4S] cluster is required as a cofactor. Mo-bis(molybdopterin guanine dinucleotide) serves as cofactor. Post-translationally, predicted to be exported by the Tat system. The position of the signal peptide cleavage has not been experimentally proven.

Its subcellular location is the periplasm. It catalyses the reaction 2 Fe(II)-[cytochrome] + nitrate + 2 H(+) = 2 Fe(III)-[cytochrome] + nitrite + H2O. Catalytic subunit of the periplasmic nitrate reductase complex NapAB. Receives electrons from NapB and catalyzes the reduction of nitrate to nitrite. The polypeptide is Periplasmic nitrate reductase (Paracoccus pantotrophus (Thiosphaera pantotropha)).